The sequence spans 258 residues: Probable parvulin-type peptidyl-prolyl cis-trans isomerase (258 aa).

An N-terminal signal peptide occupies residues 1–19; the sequence is MKRIAMLAAACVIAVPAFA. The PpiC domain maps to 127-219; sequence KMEYKVRHIL…FGWHVIQVDD (93 aa).

The protein belongs to the PpiC/parvulin rotamase family.

The catalysed reaction is [protein]-peptidylproline (omega=180) = [protein]-peptidylproline (omega=0). The polypeptide is Probable parvulin-type peptidyl-prolyl cis-trans isomerase (Bordetella parapertussis (strain 12822 / ATCC BAA-587 / NCTC 13253)).